Reading from the N-terminus, the 407-residue chain is Phosphopentomutase (407 aa).

Mn(2+) is bound by residues aspartate 10, aspartate 306, histidine 311, aspartate 347, histidine 348, and histidine 359.

It belongs to the phosphopentomutase family. Mn(2+) serves as cofactor.

The protein resides in the cytoplasm. It catalyses the reaction 2-deoxy-alpha-D-ribose 1-phosphate = 2-deoxy-D-ribose 5-phosphate. The enzyme catalyses alpha-D-ribose 1-phosphate = D-ribose 5-phosphate. It participates in carbohydrate degradation; 2-deoxy-D-ribose 1-phosphate degradation; D-glyceraldehyde 3-phosphate and acetaldehyde from 2-deoxy-alpha-D-ribose 1-phosphate: step 1/2. Its function is as follows. Isomerase that catalyzes the conversion of deoxy-ribose 1-phosphate (dRib-1-P) and ribose 1-phosphate (Rib-1-P) to deoxy-ribose 5-phosphate (dRib-5-P) and ribose 5-phosphate (Rib-5-P), respectively. This is Phosphopentomutase from Shigella boydii serotype 18 (strain CDC 3083-94 / BS512).